Here is a 344-residue protein sequence, read N- to C-terminus: MQTKIKNLTTQFHTSLQKNKHDLDQLMTLDKEFLGKKGILFELTQELKSLPHAQKAVAGKLINVLKQEIILTLQKEKEILQRNQLNAKLLQEEIDPTLPGLKFFQGSAHPLNQIIEQIEDLFLSLGYEIKEGNEIETDFYNFEMLNMGKGHPARAMQDSFYIDPQKLLRTHTSNVQVKEMKARQGGPLKIISPGKVYRKDDDDATHSHQFMQLEGLVIDKNINFSHLKETLLLITKELFGTSQEIHLRPSYFPFTEPSIEVDLVITKKDGTKEYLEILGAGLVHPQVLKNANYDPEKYQGFAFGIGIERIAMIKYQIDNIRHFYTNDIRFLKQFARNTTNNENY.

Position 256 (Glu256) interacts with Mg(2+).

The protein belongs to the class-II aminoacyl-tRNA synthetase family. Phe-tRNA synthetase alpha subunit type 1 subfamily. As to quaternary structure, tetramer of two alpha and two beta subunits. The cofactor is Mg(2+).

It is found in the cytoplasm. The catalysed reaction is tRNA(Phe) + L-phenylalanine + ATP = L-phenylalanyl-tRNA(Phe) + AMP + diphosphate + H(+). The protein is Phenylalanine--tRNA ligase alpha subunit of Onion yellows phytoplasma (strain OY-M).